We begin with the raw amino-acid sequence, 173 residues long: Membrane-bound hydrogenase subunit beta (173 aa).

It belongs to the complex I 30 kDa subunit family. In terms of assembly, the membrane-bound hydrogenase complex is composed of MbhK and MbhL, and may also contain MbhJ. It depends on Ni(2+) as a cofactor.

It localises to the cell membrane. It carries out the reaction H2 + 2 oxidized [2Fe-2S]-[ferredoxin] = 2 reduced [2Fe-2S]-[ferredoxin] + 2 H(+). Its activity is regulated as follows. Inhibited by 0.1 mM Cu(2+). Functionally, beta subunit of a hydrogen-evolving hydrogenase that utilizes protons both as a substrate for hydrogen production and proton translocation. Acts by coupling the redox reaction via ferredoxin and iron-sulfur (Fe-S) clusters to proton translocation across the membrane thereby conserving the redox energy in a proton gradient. The chain is Membrane-bound hydrogenase subunit beta from Pyrococcus furiosus (strain ATCC 43587 / DSM 3638 / JCM 8422 / Vc1).